The sequence spans 201 residues: NADH-quinone oxidoreductase subunit C (201 aa).

This sequence belongs to the complex I 30 kDa subunit family. In terms of assembly, NDH-1 is composed of 14 different subunits. Subunits NuoB, C, D, E, F, and G constitute the peripheral sector of the complex.

It localises to the cell inner membrane. The enzyme catalyses a quinone + NADH + 5 H(+)(in) = a quinol + NAD(+) + 4 H(+)(out). In terms of biological role, NDH-1 shuttles electrons from NADH, via FMN and iron-sulfur (Fe-S) centers, to quinones in the respiratory chain. The immediate electron acceptor for the enzyme in this species is believed to be ubiquinone. Couples the redox reaction to proton translocation (for every two electrons transferred, four hydrogen ions are translocated across the cytoplasmic membrane), and thus conserves the redox energy in a proton gradient. This is NADH-quinone oxidoreductase subunit C from Dechloromonas aromatica (strain RCB).